Consider the following 1448-residue polypeptide: Probable serine/threonine-protein kinase irlB (1448 aa).

Over residues 412–423 (DDDDYDDYDDDD) the composition is skewed to acidic residues. The disordered stretch occupies residues 412–446 (DDDDYDDYDDDDDHHSGCNNNNNNNNDGDHNEDEN). Residues 428–437 (GCNNNNNNNN) show a composition bias toward low complexity. 3 coiled-coil regions span residues 666–817 (AESE…EIQN), 887–921 (EIQL…SNMK), and 974–1016 (ENNK…QDED). Residues 975–1008 (NNKKQNLINDNNNNNNNNNNNNNNNNNNNNNNKL) are disordered. The span at 978 to 1008 (KQNLINDNNNNNNNNNNNNNNNNNNNNNNKL) shows a compositional bias: low complexity. In terms of domain architecture, Protein kinase spans 1027-1293 (RNESNILGRG…IQNVLNHPLF (267 aa)). ATP-binding positions include 1033 to 1041 (LGRGSNGTL) and lysine 1056. Residue aspartate 1151 is the Proton acceptor of the active site. In terms of domain architecture, KEN spans 1296-1448 (LEKKIQFIDA…TIDYLFNFYN (153 aa)).

It belongs to the protein kinase superfamily. Ser/Thr protein kinase family.

It carries out the reaction L-seryl-[protein] + ATP = O-phospho-L-seryl-[protein] + ADP + H(+). The enzyme catalyses L-threonyl-[protein] + ATP = O-phospho-L-threonyl-[protein] + ADP + H(+). The polypeptide is Probable serine/threonine-protein kinase irlB (irlB-1) (Dictyostelium discoideum (Social amoeba)).